Reading from the N-terminus, the 202-residue chain is Putative pituitary tumor-transforming gene 3 protein (202 aa).

Residues 61–64 (RKAL) carry the D-box motif. The disordered stretch occupies residues 67-92 (VNRATEKSVKTNGPLKQKQPSFSAKK). The SH3-binding motif lies at 163 to 173 (PPLPLKMPSPP).

It belongs to the securin family.

The protein localises to the cytoplasm. The protein resides in the nucleus. This chain is Putative pituitary tumor-transforming gene 3 protein (PTTG3), found in Pongo pygmaeus (Bornean orangutan).